The sequence spans 607 residues: Autophagy-related protein 16-1 (607 aa).

The interval 13 to 43 (WKRHISEQLRRRDRLQRQAFEEIILQYNKLL) is interaction with ATG5. The stretch at 78–230 (NDNQLQEMAQ…QKELAEAAKE (153 aa)) forms a coiled coil. At Ser139 the chain carries Phosphoserine; by CK2. Residues 207–230 (AENEKDSRRRQARLQKELAEAAKE) form a WIPI2-binding region. Residues 230 to 242 (EPLPVEQDDDIEV) form an RB1CC1-binding region. A phosphoserine mark is found at Ser269 and Ser287. The short motif at 296-299 (DNVD) is the Caspase cleavage element. 7 WD repeats span residues 320-359 (AHDGEVNAVQFSPGSRLLATGGMDRRVKLWEVFGEKCEFK), 364-403 (GSNAGITSIEFDSAGSYLLAASNDFASRIWTVDDYRLRHT), 406-445 (GHSGKVLSAKFLLDNARIVSGSHDRTLKLWDLRSKVCIKT), 447-484 (FAGSSCNDIVCTEQCVMSGHFDKKIRFWDIRSESIVRE), 486-525 (ELLGKITALDLNPERTELLSCSRDDLLKVIDLRTNAIKQT), 532-573 (KCGS…KVLS), and 575-607 (QHSSSINAVAWSPSGSHVVSVDKGCKAVLWAQY).

Belongs to the WD repeat ATG16 family. As to quaternary structure, homodimer. Homooligomer. Heterooligomer with ATG16L2. Interacts with WIPI1. Interacts with WIPI2. Interacts with RB1CC1; the interaction is required for ULK1 complex-dependent autophagy. Interacts with ATG5. Part of the minor complex composed of 4 sets of ATG12-ATG5 and ATG16L1 (400 kDa); this complex interacts with ATG3 leading to disruption of ATG7 interaction and promotion of ATG8-like proteins lipidation. Part of the major complex composed of 8 sets of ATG12-ATG5 and ATG16L1 (800 kDa). Interacts with RAB33B (GTP- and GDP-bound forms); the complex consists of a tetramer where two RAB33B molecules bind independently one molecule of the ATG16L1 homodimer; the interaction promotes ATG12-ATG5-ATG16L1 complex recruitment to phagophores. Interacts (via WD repeats) with TMEM59; the interaction mediates unconventional autophagic activity of TMEM59. Interacts with TLR2. Interacts (via WD repeats) with MEFV. Interacts with PPP1CA; the interaction dephosphorylates ATG16L1 causing dissociation of ATG12-ATG5-ATG16L1 complex. Interacts (via N-terminal) with CLTC. Interacts with NOD1. Interacts with NOD2. Interacts with TUFM. Interacts with TRIM16. Interacts (via WD repeats) with SPATA33. Interacts with IRGM. In terms of processing, proteolytic cleavage by activated CASP3 leads to degradation and may regulate autophagy upon cellular stress and apoptotic stimuli. Post-translationally, phosphorylation at Ser-139 promotes association with the ATG12-ATG5 conjugate to form the ATG12-ATG5-ATG16L1 complex.

It is found in the cytoplasm. Its subcellular location is the preautophagosomal structure membrane. It localises to the endosome membrane. The protein resides in the lysosome membrane. Its function is as follows. Plays an essential role in both canonical and non-canonical autophagy: interacts with ATG12-ATG5 to mediate the lipidation to ATG8 family proteins (MAP1LC3A, MAP1LC3B, MAP1LC3C, GABARAPL1, GABARAPL2 and GABARAP). Acts as a molecular hub, coordinating autophagy pathways via distinct domains that support either canonical or non-canonical signaling. During canonical autophagy, interacts with ATG12-ATG5 to mediate the conjugation of phosphatidylethanolamine (PE) to ATG8 proteins, to produce a membrane-bound activated form of ATG8. Thereby, controls the elongation of the nascent autophagosomal membrane. As part of the ATG8 conjugation system with ATG5 and ATG12, required for recruitment of LRRK2 to stressed lysosomes and induction of LRRK2 kinase activity in response to lysosomal stress. Also involved in non-canonical autophagy, a parallel pathway involving conjugation of ATG8 proteins to single membranes at endolysosomal compartments, probably by catalyzing conjugation of phosphatidylserine (PS) to ATG8. Non-canonical autophagy plays a key role in epithelial cells to limit lethal infection by influenza A (IAV) virus. Regulates mitochondrial antiviral signaling (MAVS)-dependent type I interferon (IFN-I) production. Negatively regulates NOD1- and NOD2-driven inflammatory cytokine response. Instead, promotes an autophagy-dependent antibacterial pathway together with NOD1 or NOD2. Plays a role in regulating morphology and function of Paneth cell. This Homo sapiens (Human) protein is Autophagy-related protein 16-1.